A 278-amino-acid chain; its full sequence is Shikimate dehydrogenase (NADP(+)) (278 aa).

Residues 18–20 (SRS) and Thr-65 each bind shikimate. Residue Lys-69 is the Proton acceptor of the active site. Glu-80 contributes to the NADP(+) binding site. Shikimate is bound by residues Asn-89 and Asp-104. NADP(+)-binding positions include 129–133 (GAGGS) and Leu-218. Residue Tyr-220 participates in shikimate binding. Gly-241 contacts NADP(+).

This sequence belongs to the shikimate dehydrogenase family. As to quaternary structure, homodimer.

It catalyses the reaction shikimate + NADP(+) = 3-dehydroshikimate + NADPH + H(+). Its pathway is metabolic intermediate biosynthesis; chorismate biosynthesis; chorismate from D-erythrose 4-phosphate and phosphoenolpyruvate: step 4/7. Its function is as follows. Involved in the biosynthesis of the chorismate, which leads to the biosynthesis of aromatic amino acids. Catalyzes the reversible NADPH linked reduction of 3-dehydroshikimate (DHSA) to yield shikimate (SA). This Rhodopseudomonas palustris (strain TIE-1) protein is Shikimate dehydrogenase (NADP(+)).